The following is a 274-amino-acid chain: Ribosomal RNA small subunit methyltransferase A (274 aa).

Residues Asn-20, Leu-22, Gly-47, Glu-68, Asp-90, and Asn-110 each contribute to the S-adenosyl-L-methionine site.

The protein belongs to the class I-like SAM-binding methyltransferase superfamily. rRNA adenine N(6)-methyltransferase family. RsmA subfamily.

The protein resides in the cytoplasm. It carries out the reaction adenosine(1518)/adenosine(1519) in 16S rRNA + 4 S-adenosyl-L-methionine = N(6)-dimethyladenosine(1518)/N(6)-dimethyladenosine(1519) in 16S rRNA + 4 S-adenosyl-L-homocysteine + 4 H(+). In terms of biological role, specifically dimethylates two adjacent adenosines (A1518 and A1519) in the loop of a conserved hairpin near the 3'-end of 16S rRNA in the 30S particle. May play a critical role in biogenesis of 30S subunits. The sequence is that of Ribosomal RNA small subunit methyltransferase A from Chlorobaculum parvum (strain DSM 263 / NCIMB 8327) (Chlorobium vibrioforme subsp. thiosulfatophilum).